A 1024-amino-acid chain; its full sequence is Unconventional myosin-Ig (1024 aa).

Residues 15–713 form the Myosin motor domain; it reads YGKPDFVLLD…TLVTLEQSRA (699 aa). Position 108–115 (108–115) interacts with ATP; that stretch reads GESGAGKT. Residues 590–612 form an actin-binding region; it reads MVALVENLASKEPFYVRCIKPNE. Positions 716–745 constitute an IQ domain; it reads IPIIVLLLQKAWRGTLARWHCRRLRAIYTI. One can recognise a TH1 domain in the interval 830 to 1023; that stretch reads GLRQDWGCQR…RSTFTLLWPS (194 aa). The interval 999–1024 is disordered; sequence VEPRPEQPEPDFQSSRSTFTLLWPSH.

The protein belongs to the TRAFAC class myosin-kinesin ATPase superfamily. Myosin family. Interacts with calmodulin; via its IQ motifs. As to expression, specifically expressed in hematopoietic cells. Detected in adult tissues of the immune system such as thymus, lymph nodes and spleen, but not in brain, lung, heart, liver, small intestine, testis and kidney (at protein level). Highly expressed in T-lymphocytes; constitutes the most highly expressed class I myosin in naive CD4 and CD8 T-cells. Also present in B-lymphocytes.

It is found in the cell membrane. It localises to the cell projection. Its subcellular location is the phagocytic cup. Unconventional myosin required during immune response for detection of rare antigen-presenting cells by regulating T-cell migration. Unconventional myosins are actin-based motor molecules with ATPase activity and serve in intracellular movements. Acts as a regulator of T-cell migration by generating membrane tension, enforcing cell-intrinsic meandering search, thereby enhancing detection of rare antigens during lymph-node surveillance, enabling pathogen eradication. Also required in B-cells, where it regulates different membrane/cytoskeleton-dependent processes. Involved in Fc-gamma receptor (Fc-gamma-R) phagocytosis. The protein is Unconventional myosin-Ig (Myo1g) of Mus musculus (Mouse).